We begin with the raw amino-acid sequence, 679 residues long: Glycine--tRNA ligase beta subunit (679 aa).

This sequence belongs to the class-II aminoacyl-tRNA synthetase family. In terms of assembly, tetramer of two alpha and two beta subunits.

The protein localises to the cytoplasm. It carries out the reaction tRNA(Gly) + glycine + ATP = glycyl-tRNA(Gly) + AMP + diphosphate. This is Glycine--tRNA ligase beta subunit from Streptococcus equi subsp. zooepidemicus (strain H70).